We begin with the raw amino-acid sequence, 453 residues long: tRNA-2-methylthio-N(6)-dimethylallyladenosine synthase (453 aa).

Residues 21–137 (RGVYISTYGC…LPQLVAKSFA (117 aa)) enclose the MTTase N-terminal domain. The [4Fe-4S] cluster site is built by C30, C66, C100, C174, C178, and C181. The Radical SAM core domain maps to 160 to 389 (RNPGVATYVN…FDVHEAMAFE (230 aa)). The 62-residue stretch at 392 to 453 (KRYEGTTMKV…FPAVFRGEMI (62 aa)) folds into the TRAM domain.

This sequence belongs to the methylthiotransferase family. MiaB subfamily. In terms of assembly, monomer. It depends on [4Fe-4S] cluster as a cofactor.

The protein resides in the cytoplasm. It carries out the reaction N(6)-dimethylallyladenosine(37) in tRNA + (sulfur carrier)-SH + AH2 + 2 S-adenosyl-L-methionine = 2-methylsulfanyl-N(6)-dimethylallyladenosine(37) in tRNA + (sulfur carrier)-H + 5'-deoxyadenosine + L-methionine + A + S-adenosyl-L-homocysteine + 2 H(+). Functionally, catalyzes the methylthiolation of N6-(dimethylallyl)adenosine (i(6)A), leading to the formation of 2-methylthio-N6-(dimethylallyl)adenosine (ms(2)i(6)A) at position 37 in tRNAs that read codons beginning with uridine. This chain is tRNA-2-methylthio-N(6)-dimethylallyladenosine synthase, found in Bdellovibrio bacteriovorus (strain ATCC 15356 / DSM 50701 / NCIMB 9529 / HD100).